Here is a 188-residue protein sequence, read N- to C-terminus: UPF0157 protein VC_A0354 (188 aa).

It belongs to the UPF0157 (GrpB) family.

This chain is UPF0157 protein VC_A0354, found in Vibrio cholerae serotype O1 (strain ATCC 39315 / El Tor Inaba N16961).